A 484-amino-acid polypeptide reads, in one-letter code: uncharacterized protein (484 aa).

The next 12 membrane-spanning stretches (helical) occupy residues 19 to 39 (LSFG…MIFV), 78 to 98 (VNWG…WLIV), 110 to 130 (LFFM…GFII), 134 to 154 (IFAI…SNYL), 165 to 185 (FSPF…AGII), 199 to 219 (IVFL…IILG), 249 to 269 (TWYW…PFTF), 289 to 309 (ISVF…TIGL), 321 to 341 (ISTI…VFVL), 360 to 380 (LFLF…GVML), 398 to 418 (FGLI…ITSL), and 440 to 460 (LGAY…LALL).

The protein localises to the cell membrane. This is an uncharacterized protein from Mesomycoplasma hyopneumoniae (strain J / ATCC 25934 / NCTC 10110) (Mycoplasma hyopneumoniae).